We begin with the raw amino-acid sequence, 81 residues long: Putative membrane protein insertion efficiency factor (81 aa).

The disordered stretch occupies residues 61–81 (NDGGFDPVPPAPSSRTSSIAE).

This sequence belongs to the UPF0161 family.

It localises to the cell inner membrane. Could be involved in insertion of integral membrane proteins into the membrane. The sequence is that of Putative membrane protein insertion efficiency factor from Pseudomonas entomophila (strain L48).